A 223-amino-acid chain; its full sequence is Endonuclease NucS (223 aa).

This sequence belongs to the NucS endonuclease family.

It localises to the cytoplasm. Its function is as follows. Cleaves both 3' and 5' ssDNA extremities of branched DNA structures. The chain is Endonuclease NucS from Mycolicibacterium gilvum (strain PYR-GCK) (Mycobacterium gilvum (strain PYR-GCK)).